We begin with the raw amino-acid sequence, 320 residues long: NAD-dependent protein deacylase SIR2rp2 (320 aa).

The transit peptide at 1-22 directs the protein to the mitochondrion; that stretch reads MRPAGTLASFLERCSARKRGRG. The Deacetylase sirtuin-type domain maps to 23 to 320; that stretch reads CVVLTGAGCS…MFFRRKTIQL (298 aa). NAD(+) contacts are provided by residues 28 to 48 and 108 to 111; these read GAGCSTESGIPDYRGPNGQYH and QNVD. His144 (proton acceptor) is an active-site residue. The Zn(2+) site is built by Cys152, Cys155, Cys207, and Cys210. Residues 248 to 250, 274 to 276, and Gly294 contribute to the NAD(+) site; these read GTS and NAG.

The protein belongs to the sirtuin family. Class II subfamily. The cofactor is Zn(2+).

It localises to the mitochondrion matrix. It carries out the reaction N(6)-acetyl-L-lysyl-[protein] + NAD(+) + H2O = 2''-O-acetyl-ADP-D-ribose + nicotinamide + L-lysyl-[protein]. Functionally, NAD-dependent protein deacylase. Catalyzes the NAD-dependent hydrolysis of acyl groups from lysine residues. The protein is NAD-dependent protein deacylase SIR2rp2 (SIR2rp2) of Leishmania major.